The chain runs to 60 residues: Large ribosomal subunit protein bL32 (60 aa).

Positions 1-25 (MAVQQNKKSPSKRGMHRSHNALNVP) are disordered. Positions 9–19 (SPSKRGMHRSH) are enriched in basic residues.

The protein belongs to the bacterial ribosomal protein bL32 family.

This is Large ribosomal subunit protein bL32 from Polaromonas naphthalenivorans (strain CJ2).